The primary structure comprises 102 residues: NADH-quinone oxidoreductase subunit K (102 aa).

Transmembrane regions (helical) follow at residues 4-24 (IGLNHYLVLSTILFAIGLVGV), 31-51 (LMLFFATEILLNSVNISFAAI), and 65-85 (FFVIAIAASEVAVGLGLLIVW).

Belongs to the complex I subunit 4L family. In terms of assembly, NDH-1 is composed of 14 different subunits. Subunits NuoA, H, J, K, L, M, N constitute the membrane sector of the complex.

The protein resides in the cell inner membrane. It catalyses the reaction a quinone + NADH + 5 H(+)(in) = a quinol + NAD(+) + 4 H(+)(out). NDH-1 shuttles electrons from NADH, via FMN and iron-sulfur (Fe-S) centers, to quinones in the respiratory chain. The immediate electron acceptor for the enzyme in this species is believed to be ubiquinone. Couples the redox reaction to proton translocation (for every two electrons transferred, four hydrogen ions are translocated across the cytoplasmic membrane), and thus conserves the redox energy in a proton gradient. The polypeptide is NADH-quinone oxidoreductase subunit K (Sulfurimonas denitrificans (strain ATCC 33889 / DSM 1251) (Thiomicrospira denitrificans (strain ATCC 33889 / DSM 1251))).